The sequence spans 35 residues: uncharacterized protein (35 aa).

Residues valine 14 to tryptophan 34 traverse the membrane as a helical segment.

Its subcellular location is the membrane. This is an uncharacterized protein from Escherichia coli (strain K12).